A 120-amino-acid chain; its full sequence is Large ribosomal subunit protein uL29 (120 aa).

Belongs to the universal ribosomal protein uL29 family. In terms of assembly, component of the large ribosomal subunit. Mature ribosomes consist of a small (40S) and a large (60S) subunit. The 40S subunit contains about 32 different proteins and 1 molecule of RNA (18S). The 60S subunit contains 45 different proteins and 3 molecules of RNA (25S, 5.8S and 5S).

The protein resides in the cytoplasm. Component of the ribosome, a large ribonucleoprotein complex responsible for the synthesis of proteins in the cell. The small ribosomal subunit (SSU) binds messenger RNAs (mRNAs) and translates the encoded message by selecting cognate aminoacyl-transfer RNA (tRNA) molecules. The large subunit (LSU) contains the ribosomal catalytic site termed the peptidyl transferase center (PTC), which catalyzes the formation of peptide bonds, thereby polymerizing the amino acids delivered by tRNAs into a polypeptide chain. The nascent polypeptides leave the ribosome through a tunnel in the LSU and interact with protein factors that function in enzymatic processing, targeting, and the membrane insertion of nascent chains at the exit of the ribosomal tunnel. The protein is Large ribosomal subunit protein uL29 of Candida albicans (strain SC5314 / ATCC MYA-2876) (Yeast).